Here is a 242-residue protein sequence, read N- to C-terminus: Stress response regulator protein 1 (242 aa).

A Response regulatory domain is found at 118-236 (NFLLVDDNFI…FDHIITCIEK (119 aa)). Aspartate 169 carries the 4-aspartylphosphate modification.

Its function is as follows. Required for stress adaptation, morphogenesis and virulence. The polypeptide is Stress response regulator protein 1 (SRR1) (Debaryomyces hansenii (strain ATCC 36239 / CBS 767 / BCRC 21394 / JCM 1990 / NBRC 0083 / IGC 2968) (Yeast)).